Here is a 578-residue protein sequence, read N- to C-terminus: Palmitoyltransferase ZDHHC1 (578 aa).

Residues 1–41 (MDVCSKNSNRTAPVSEGGIRRADVPLCSRTNGWSWPPHPFQ) are Cytoplasmic-facing. Residues 42–62 (FLAWLLYLYFAVTGFGVFVPL) traverse the membrane as a helical segment. Residues 63–71 (LPTHWIPAG) lie on the Lumenal side of the membrane. Residues 72–92 (YICTGITFVCHLFMHLMAVSI) form a helical membrane-spanning segment. The Cytoplasmic portion of the chain corresponds to 93–174 (DPADYNVRAK…YWLFLNSVIS (82 aa)). One can recognise a DHHC domain in the interval 121-173 (ENCHCYLCEVDVGPKSKHCSACNKCVASFDHHCRWLNNCVGSRNYWLFLNSVI). Cys153 functions as the S-palmitoyl cysteine intermediate in the catalytic mechanism. A helical transmembrane segment spans residues 175-195 (ALLGIVLVVVIASYVFIEFFL). Topologically, residues 196–230 (DPSKLRSDKHFQQVRNESVVWFVFLPVAPVTTAGP) are lumenal. The helical transmembrane segment at 231–251 (AIPALAGVTIALGLLSALLLG) threads the bilayer. Topologically, residues 252-578 (HLLCFHIYLM…PSSRVGTSLA (327 aa)) are cytoplasmic. Basic and acidic residues predominate over residues 278-288 (QEAGDSRKPPP). 4 disordered regions span residues 278-298 (QEAG…PKLN), 345-376 (HMDE…KRKV), 497-517 (SAAG…TAAR), and 532-578 (SMFM…TSLA). The span at 363 to 376 (PHPHKHAQKKKRKV) shows a compositional bias: basic residues. A compositionally biased stretch (basic residues) spans 552–561 (AAKRKQTGKK).

Belongs to the DHHC palmitoyltransferase family.

Its subcellular location is the endosome membrane. The protein resides in the endoplasmic reticulum membrane. The protein localises to the golgi apparatus. The enzyme catalyses L-cysteinyl-[protein] + hexadecanoyl-CoA = S-hexadecanoyl-L-cysteinyl-[protein] + CoA. Palmitoyltransferase that catalyzes the addition of palmitate onto various protein substrates, such as ncdn and nlrp3. In Danio rerio (Zebrafish), this protein is Palmitoyltransferase ZDHHC1.